We begin with the raw amino-acid sequence, 550 residues long: Glycosyltransferase-like protein gnt12 (550 aa).

The segment at 1–29 is disordered; that stretch reads MSYLPLYNNNNNINNNNNNNNNRINNNKE. At 1-36 the chain is on the cytoplasmic side; the sequence is MSYLPLYNNNNNINNNNNNNNNRINNNKEKGVKNKP. Low complexity predominate over residues 8–25; sequence NNNNNINNNNNNNNNRIN. The chain crosses the membrane as a helical; Signal-anchor for type II membrane protein span at residues 37–57; it reads FQIFISIVFIVFLCFFLIWSM. Over 58–550 the chain is Extracellular; sequence EAKKDKNIKI…LFNEPLTNEC (493 aa). Over residues 81–97 the composition is skewed to low complexity; it reads LINEPINNNKNNKNNIP. Positions 81-100 are disordered; that stretch reads LINEPINNNKNNKNNIPKNH. 3 N-linked (GlcNAc...) asparagine glycosylation sites follow: asparagine 233, asparagine 322, and asparagine 426.

Belongs to the glycosyltransferase 8 family. Highly divergent.

The protein resides in the membrane. The polypeptide is Glycosyltransferase-like protein gnt12 (gnt12) (Dictyostelium discoideum (Social amoeba)).